We begin with the raw amino-acid sequence, 290 residues long: N-acetylneuraminate lyase (290 aa).

Aceneuramate is bound by residues serine 44 and threonine 45. The active-site Proton donor is the tyrosine 133. Lysine 161 functions as the Schiff-base intermediate with substrate in the catalytic mechanism. Aceneuramate-binding residues include threonine 163, glycine 185, aspartate 187, glutamate 188, and serine 204.

The protein belongs to the DapA family. NanA subfamily. Homotetramer.

It localises to the cytoplasm. It carries out the reaction aceneuramate = aldehydo-N-acetyl-D-mannosamine + pyruvate. It functions in the pathway amino-sugar metabolism; N-acetylneuraminate degradation; D-fructose 6-phosphate from N-acetylneuraminate: step 1/5. Catalyzes the reversible aldol cleavage of N-acetylneuraminic acid (sialic acid; Neu5Ac) to form pyruvate and N-acetylmannosamine (ManNAc) via a Schiff base intermediate. This is N-acetylneuraminate lyase from Fusobacterium nucleatum subsp. nucleatum (strain ATCC 25586 / DSM 15643 / BCRC 10681 / CIP 101130 / JCM 8532 / KCTC 2640 / LMG 13131 / VPI 4355).